Here is a 527-residue protein sequence, read N- to C-terminus: Bifunctional pantoate ligase/cytidylate kinase (527 aa).

The segment at 1–277 is pantoate--beta-alanine ligase; that stretch reads MRQLISPEAL…VGTARLIDNL (277 aa). Position 27–34 (27–34) interacts with ATP; the sequence is MGALHAGH. His34 serves as the catalytic Proton donor. Gln58 lines the (R)-pantoate pocket. Residue Gln58 participates in beta-alanine binding. An ATP-binding site is contributed by 147–150; that stretch reads GEKD. Gln153 serves as a coordination point for (R)-pantoate. Residues Val176 and 184–187 contribute to the ATP site; that span reads LSSR. The cytidylate kinase stretch occupies residues 278 to 527; that stretch reads TLQGRRPIIA…GQTPSPLSLG (250 aa). The disordered stretch occupies residues 507 to 527; that stretch reads GLGDSSPQATPGQTPSPLSLG. Positions 511 to 527 are enriched in polar residues; sequence SSPQATPGQTPSPLSLG.

This sequence in the N-terminal section; belongs to the pantothenate synthetase family. The protein in the C-terminal section; belongs to the cytidylate kinase family. Type 1 subfamily.

Its subcellular location is the cytoplasm. The catalysed reaction is (R)-pantoate + beta-alanine + ATP = (R)-pantothenate + AMP + diphosphate + H(+). The enzyme catalyses CMP + ATP = CDP + ADP. It carries out the reaction dCMP + ATP = dCDP + ADP. It functions in the pathway cofactor biosynthesis; (R)-pantothenate biosynthesis; (R)-pantothenate from (R)-pantoate and beta-alanine: step 1/1. Catalyzes the condensation of pantoate with beta-alanine in an ATP-dependent reaction via a pantoyl-adenylate intermediate. Its function is as follows. Catalyzes the transfer of a phosphate group from ATP to either CMP or dCMP to form CDP or dCDP and ADP, respectively. The chain is Bifunctional pantoate ligase/cytidylate kinase from Synechococcus elongatus (strain ATCC 33912 / PCC 7942 / FACHB-805) (Anacystis nidulans R2).